The following is a 263-amino-acid chain: NADH dehydrogenase [ubiquinone] iron-sulfur protein 3, mitochondrial (263 aa).

The N-terminal 35 residues, 1-35, are a transit peptide targeting the mitochondrion; sequence MAAAAARVWCRGLLGAASVGRGAGRPSVLWQHVRR.

The protein belongs to the complex I 30 kDa subunit family. Core subunit of respiratory chain NADH dehydrogenase (Complex I) which is composed of 45 different subunits. Interacts with NDUFAF3. Interacts with RAB5IF. Found in subcomplexes containing subunits NDUFS2, MT-ND1 and NDUFA13.

Its subcellular location is the mitochondrion inner membrane. The enzyme catalyses a ubiquinone + NADH + 5 H(+)(in) = a ubiquinol + NAD(+) + 4 H(+)(out). Core subunit of the mitochondrial membrane respiratory chain NADH dehydrogenase (Complex I) which catalyzes electron transfer from NADH through the respiratory chain, using ubiquinone as an electron acceptor. Essential for the catalytic activity and assembly of complex I. In Mus musculus (Mouse), this protein is NADH dehydrogenase [ubiquinone] iron-sulfur protein 3, mitochondrial (Ndufs3).